An 863-amino-acid chain; its full sequence is DNA mismatch repair protein MutS (863 aa).

607-614 (GPNMAGKS) serves as a coordination point for ATP.

This sequence belongs to the DNA mismatch repair MutS family.

In terms of biological role, this protein is involved in the repair of mismatches in DNA. It is possible that it carries out the mismatch recognition step. This protein has a weak ATPase activity. The chain is DNA mismatch repair protein MutS from Caldicellulosiruptor bescii (strain ATCC BAA-1888 / DSM 6725 / KCTC 15123 / Z-1320) (Anaerocellum thermophilum).